The following is a 362-amino-acid chain: MDKVMAQLEGLVAHYEELQEMMADPEVINDTKRYMEISKEEADLREVVQKYKKYKEDKKEIADNKEIIANETDSDLIEMAKEENAEIEKEIPELEDQIKILMLPKDPNDDKDIIMEIRGAAGGDEASLFAGDLLRMYEKYAERQNWKVSMIDSEPTEVGGYKRVAIMITGDKVYSKLKYENGAHRVQRIPVTESQGRVHTSTATVAVMPEYEQVDIDIDPKDIRVDVYRSSGAGGQHINKTSSAVRMTHLPTGIVVAMQDQRSQQQNREKAMQILKSRVYDYYESQNQAKYDAKRKNAIGTGDRSERIRTYNYPQNRVTDHRIGLTINKLDRVMNGELDEIIDALILYNQTKQLEELADQNA.

N5-methylglutamine is present on glutamine 236.

This sequence belongs to the prokaryotic/mitochondrial release factor family. Methylated by PrmC. Methylation increases the termination efficiency of RF1.

Its subcellular location is the cytoplasm. Functionally, peptide chain release factor 1 directs the termination of translation in response to the peptide chain termination codons UAG and UAA. The protein is Peptide chain release factor 1 of Lactobacillus helveticus (strain DPC 4571).